Here is an 865-residue protein sequence, read N- to C-terminus: DNA topoisomerase 1 (865 aa).

In terms of domain architecture, Toprim spans 3–142 (KALVIVESPA…RYSRVVFNEI (140 aa)). Glu-9 is a binding site for Mg(2+). The disordered stretch occupies residues 37 to 65 (LPTSGSAAKKSADSTSTKTAKKPKKDERG). Residues 39 to 54 (TSGSAAKKSADSTSTK) show a composition bias toward low complexity. Mg(2+) is bound at residue Asp-111. The Topo IA-type catalytic domain maps to 158–575 (NIDRVNAQQA…HFFSDFTQQL (418 aa)). An interaction with DNA region spans residues 192–197 (SAGRVQ). Residue Tyr-319 is the O-(5'-phospho-DNA)-tyrosine intermediate of the active site. C4-type zinc fingers lie at residues 599-630 (CPTC…KERC), 662-689 (CPKC…NPTC), and 711-736 (CEKC…NEEC).

This sequence belongs to the type IA topoisomerase family. In terms of assembly, monomer. It depends on Mn(2+) as a cofactor. The cofactor is Ca(2+).

The catalysed reaction is ATP-independent breakage of single-stranded DNA, followed by passage and rejoining.. In terms of biological role, releases the supercoiling and torsional tension of DNA, which is introduced during the DNA replication and transcription, by transiently cleaving and rejoining one strand of the DNA duplex. Introduces a single-strand break via transesterification at a target site in duplex DNA. The scissile phosphodiester is attacked by the catalytic tyrosine of the enzyme, resulting in the formation of a DNA-(5'-phosphotyrosyl)-enzyme intermediate and the expulsion of a 3'-OH DNA strand. The free DNA strand then undergoes passage around the unbroken strand, thus removing DNA supercoils. Finally, in the religation step, the DNA 3'-OH attacks the covalent intermediate to expel the active-site tyrosine and restore the DNA phosphodiester backbone. This chain is DNA topoisomerase 1, found in Escherichia coli (strain K12).